The following is a 262-amino-acid chain: Lectin (262 aa).

Residues 1–21 (MASSVLLVLSLFLVLLLTQAS) form the signal peptide. N-linked (GlcNAc...) asparagine glycans are attached at residues Asn53, Asn82, Asn100, Asn129, and Asn205.

It belongs to the leguminous lectin family.

Functionally, this metalloglycoprotein, containing Ca(2+), Mn(2+), binds glycoconjugates containing terminal non-reducing alpha-D-GalNAc residues. The protein is Lectin of Phaseolus lunatus (Lima bean).